We begin with the raw amino-acid sequence, 169 residues long: Methanogen homoaconitase small subunit (169 aa).

The YLRT signature appears at Tyr-27–Thr-30.

Belongs to the LeuD family. LeuD type 2 subfamily. In terms of assembly, heterotetramer of 2 HacA and 2 HacB proteins.

It catalyses the reaction (2R)-homocitrate = (2R,3S)-homoisocitrate. The catalysed reaction is (2R)-homocitrate = cis-homoaconitate + H2O. The enzyme catalyses (2R,3S)-homoisocitrate = cis-homoaconitate + H2O. It carries out the reaction cis-(homo)2aconitate + H2O = (2R,3S)-iso(homo)2citrate. It catalyses the reaction cis-(homo)3aconitate + H2O = (2R,3S)-iso(homo)3citrate. It participates in organic acid metabolism; 2-oxosuberate biosynthesis. Component of a hydro-lyase with broad substrate specificity for cis-unsaturated tricarboxylic acids. Catalyzes both the reversible dehydration of (R)-homocitrate ((R)-2-hydroxybutane-1,2,4-tricarboxylate) to produce cis-homoaconitate ((Z)-but-1-ene-1,2,4-tricarboxylate), and its hydration to homoisocitrate ((1R,2S)-1-hydroxybutane-1,2,4-tricarboxylate). Is also able to hydrate the analogous longer chain substrates cis-homo(2)-aconitate, cis-homo(3)-aconitate. These reactions are part of the biosynthesis pathway of coenzyme B. In Methanosarcina mazei (strain ATCC BAA-159 / DSM 3647 / Goe1 / Go1 / JCM 11833 / OCM 88) (Methanosarcina frisia), this protein is Methanogen homoaconitase small subunit (hacB).